The primary structure comprises 262 residues: Aminoglycoside 3'-phosphotransferase (262 aa).

D187 (proton acceptor) is an active-site residue.

This sequence belongs to the aminoglycoside phosphotransferase family. As to quaternary structure, monomer.

It localises to the cytoplasm. The catalysed reaction is kanamycin A + ATP = kanamycin 3'-phosphate + ADP + H(+). Resistance to butirosin and structurally-related aminoglycosides, including kanamycin and amikacin. The chain is Aminoglycoside 3'-phosphotransferase from Niallia circulans (Bacillus circulans).